The chain runs to 306 residues: Elongation factor Ts (306 aa).

The segment at 79–82 (TDFV) is involved in Mg(2+) ion dislocation from EF-Tu.

It belongs to the EF-Ts family.

The protein localises to the cytoplasm. Functionally, associates with the EF-Tu.GDP complex and induces the exchange of GDP to GTP. It remains bound to the aminoacyl-tRNA.EF-Tu.GTP complex up to the GTP hydrolysis stage on the ribosome. The sequence is that of Elongation factor Ts from Mesorhizobium japonicum (strain LMG 29417 / CECT 9101 / MAFF 303099) (Mesorhizobium loti (strain MAFF 303099)).